The primary structure comprises 160 residues: Ribosome maturation factor RimP (160 aa).

It belongs to the RimP family.

It is found in the cytoplasm. Functionally, required for maturation of 30S ribosomal subunits. This chain is Ribosome maturation factor RimP, found in Cronobacter sakazakii (strain ATCC BAA-894) (Enterobacter sakazakii).